Reading from the N-terminus, the 145-residue chain is MRSEKHLPPLPLLLAICCLGTLHPSSGFPQSVPSYMEALDIPESEKLAFCFSQWTALPDQEQIPSFVMDLCSSIYNRMKVNEENNHEIYKRFLFQFSRTKDPSLKTGESQIATAEYTKRDSSGIVGRPFFLFRPRNGRKVSINEH.

The first 27 residues, 1–27, serve as a signal peptide directing secretion; sequence MRSEKHLPPLPLLLAICCLGTLHPSSG. Propeptides lie at residues 28 to 89 and 92 to 117; these read FPQS…HEIY and FLFQ…AEYT. Asparagine amide is present on Asn-136. Positions 140–145 are excised as a propeptide; sequence VSINEH.

This sequence belongs to the NmU family. Expressed by the skin glands.

The protein localises to the secreted. Its function is as follows. Stimulates uterine smooth muscle contraction. Synthetic peptide NmS-17 induces calcium mobilization in CHO cells transfected with either human FM-3/GPR66 (EC(50)=0.085 nM) or FM-4/TGR-1 (EC(50)=0.231 nM) NmU/NmS receptors. In Bombina orientalis (Oriental fire-bellied toad), this protein is Neuromedin-S (nms).